The following is a 475-amino-acid chain: Sulfate adenylyltransferase subunit 1 (475 aa).

Residues 25–239 (KSLLRFLTCG…EVLETVEIQR (215 aa)) enclose the tr-type G domain. A G1 region spans residues 34-41 (GSVDDGKS). 34 to 41 (GSVDDGKS) contributes to the GTP binding site. A G2 region spans residues 92–96 (GITID). A G3 region spans residues 113 to 116 (DTPG). Residues 113–117 (DTPGH) and 168–171 (NKMD) contribute to the GTP site. Residues 168-171 (NKMD) are G4. The tract at residues 206–208 (SAL) is G5.

Belongs to the TRAFAC class translation factor GTPase superfamily. Classic translation factor GTPase family. CysN/NodQ subfamily. In terms of assembly, heterodimer composed of CysD, the smaller subunit, and CysN.

It catalyses the reaction sulfate + ATP + H(+) = adenosine 5'-phosphosulfate + diphosphate. The protein operates within sulfur metabolism; hydrogen sulfide biosynthesis; sulfite from sulfate: step 1/3. With CysD forms the ATP sulfurylase (ATPS) that catalyzes the adenylation of sulfate producing adenosine 5'-phosphosulfate (APS) and diphosphate, the first enzymatic step in sulfur assimilation pathway. APS synthesis involves the formation of a high-energy phosphoric-sulfuric acid anhydride bond driven by GTP hydrolysis by CysN coupled to ATP hydrolysis by CysD. The polypeptide is Sulfate adenylyltransferase subunit 1 (Escherichia coli (strain ATCC 8739 / DSM 1576 / NBRC 3972 / NCIMB 8545 / WDCM 00012 / Crooks)).